Consider the following 111-residue polypeptide: Large ribosomal subunit protein uL22 (111 aa).

Belongs to the universal ribosomal protein uL22 family. As to quaternary structure, part of the 50S ribosomal subunit.

Its function is as follows. This protein binds specifically to 23S rRNA; its binding is stimulated by other ribosomal proteins, e.g. L4, L17, and L20. It is important during the early stages of 50S assembly. It makes multiple contacts with different domains of the 23S rRNA in the assembled 50S subunit and ribosome. Functionally, the globular domain of the protein is located near the polypeptide exit tunnel on the outside of the subunit, while an extended beta-hairpin is found that lines the wall of the exit tunnel in the center of the 70S ribosome. The protein is Large ribosomal subunit protein uL22 of Chlamydia caviae (strain ATCC VR-813 / DSM 19441 / 03DC25 / GPIC) (Chlamydophila caviae).